The following is a 472-amino-acid chain: Glutamate--tRNA ligase (472 aa).

Residues P8 to S18 carry the 'HIGH' region motif. The 'KMSKS' region signature appears at K239–R243. Residue K242 coordinates ATP.

It belongs to the class-I aminoacyl-tRNA synthetase family. Glutamate--tRNA ligase type 1 subfamily. Monomer.

The protein localises to the cytoplasm. It catalyses the reaction tRNA(Glu) + L-glutamate + ATP = L-glutamyl-tRNA(Glu) + AMP + diphosphate. Its function is as follows. Catalyzes the attachment of glutamate to tRNA(Glu) in a two-step reaction: glutamate is first activated by ATP to form Glu-AMP and then transferred to the acceptor end of tRNA(Glu). The sequence is that of Glutamate--tRNA ligase from Solibacter usitatus (strain Ellin6076).